Reading from the N-terminus, the 514-residue chain is FAD-dependent monooxygenase AacuC (514 aa).

Positions 1-29 (MVSNEYLTHGDKDEFDPAKWSSTPGELPP) are disordered. The segment covering 8–17 (THGDKDEFDP) has biased composition (basic and acidic residues). The FAD site is built by valine 79 and arginine 146. Residue arginine 227 is part of the active site. Residues aspartate 358 and glycine 371 each contribute to the FAD site.

The protein belongs to the paxM FAD-dependent monooxygenase family. Requires FAD as cofactor.

It functions in the pathway secondary metabolite biosynthesis. Its function is as follows. FAD-dependent monooxygenase; part of the gene cluster that mediates the biosynthesis of the tetrahydroxanthone dimer secalonic acid D. The pathway begins with the synthesis of atrochrysone thioester by the polyketide synthase AacuL. The atrochrysone carboxyl ACP thioesterase AacuM then breaks the thioester bond and releases the atrochrysone carboxylic acid from AacuL. Atrochrysone carboxylic acid is decarboxylated by the decarboxylase AacuI, and oxidized by the anthrone oxygenase AacuG to yield emodin. Emodin is then reduced to emodin hydroquinone by a yet unidentified oxidoreductase. A-ring reduction by the short chain dehydrogenase AacuN, dehydration by the scytalone dehydratase-like protein AacuK and probable spontaneous re-oxidation, results in overall deoxygenation to chrysophanol. Baeyer-Villiger oxidation by the Baeyer-Villiger monooxygenase (BVMO) AacuH then yields monodictyphenone. Monodictyphenone is transformed into compounds with the tetrahydroxanthone skeleton via methylesterification by the methyltransferase AacuQ, followed by the action of the flavin-dependent monooxygenase AacuC, the isomerase AacuP, and the short chain dehydrogenase/reductase AacuF or AacuD. AacuF and AacuD should accept the same compound as a substrate but perform the ketoreduction with a different stereoselectivity, thus yielding blennolides B and A, respectively. In the final step of the biosynthesis, the cytochrome P450 monooxygenase AacuE accepts blennolide B and/or blennolide A to conduct the dimerization reaction to furnish the tetrahydroxanthone dimers, secalonic acids D, B, and F. The sequence is that of FAD-dependent monooxygenase AacuC from Aspergillus aculeatus (strain ATCC 16872 / CBS 172.66 / WB 5094).